Reading from the N-terminus, the 31-residue chain is Electron transfer flavoprotein-ubiquinone oxidoreductase (31 aa).

11-25 (VVIVGAGGAGLSAAI) lines the FAD pocket.

In terms of assembly, monomer. Requires [4Fe-4S] cluster as cofactor. It depends on FAD as a cofactor.

The enzyme catalyses a ubiquinone + reduced [electron-transfer flavoprotein] = a ubiquinol + oxidized [electron-transfer flavoprotein] + H(+). Accepts electrons from ETF and reduces ubiquinone. This chain is Electron transfer flavoprotein-ubiquinone oxidoreductase, found in Paracoccus denitrificans.